Consider the following 577-residue polypeptide: Methionine--tRNA ligase (577 aa).

The 'HIGH' region motif lies at 21-31; it reads PYANGPLHVGH. Zn(2+)-binding residues include C153, C156, C166, and C169. The 'KMSKS' region signature appears at 355–359; it reads QMSTS. Residue T358 coordinates ATP.

It belongs to the class-I aminoacyl-tRNA synthetase family. MetG type 1 subfamily. In terms of assembly, monomer. Zn(2+) is required as a cofactor.

Its subcellular location is the cytoplasm. The enzyme catalyses tRNA(Met) + L-methionine + ATP = L-methionyl-tRNA(Met) + AMP + diphosphate. In terms of biological role, is required not only for elongation of protein synthesis but also for the initiation of all mRNA translation through initiator tRNA(fMet) aminoacylation. The protein is Methionine--tRNA ligase of Rubrobacter xylanophilus (strain DSM 9941 / JCM 11954 / NBRC 16129 / PRD-1).